We begin with the raw amino-acid sequence, 252 residues long: MIHSKRLRLWLYLVLLAVFISACGMKEDKQIKENFNKTLSLYPTKNLDDFYDKEGFRDQEFEKGDKGTWIVDSEMVVELKDKKMESRSMVLYINRNTRTTKGNFIVRELWEDSKGYAQSKDTKYPVKMEHNRIIPTKPIADDKLRKEIENFKFFVQYGDFKDINDYKDGDISYNPNVPSYSAEYQLSNNDYNVKQLRKRYDIPTKKAPKLLIKGDGDLKGSSIGHKNLEFTFVENKEENIYFTDSINFKPTK.

Positions 1–22 (MIHSKRLRLWLYLVLLAVFISA) are cleaved as a signal peptide. Residue C23 is the site of N-palmitoyl cysteine attachment. C23 carries S-diacylglycerol cysteine lipidation.

The protein belongs to the staphylococcal tandem lipoprotein family.

Its subcellular location is the cell membrane. This is an uncharacterized protein from Staphylococcus aureus (strain MW2).